We begin with the raw amino-acid sequence, 804 residues long: Leucine--tRNA ligase (804 aa).

Residues 40–51 (PYPSGAGLHVGH) carry the 'HIGH' region motif. The 'KMSKS' region signature appears at 576–580 (KMSKS). Lys579 serves as a coordination point for ATP.

This sequence belongs to the class-I aminoacyl-tRNA synthetase family.

The protein resides in the cytoplasm. The enzyme catalyses tRNA(Leu) + L-leucine + ATP = L-leucyl-tRNA(Leu) + AMP + diphosphate. The sequence is that of Leucine--tRNA ligase from Bacillus pumilus (strain SAFR-032).